A 309-amino-acid polypeptide reads, in one-letter code: tRNA pseudouridine synthase B (309 aa).

The active-site Nucleophile is Asp-39.

It belongs to the pseudouridine synthase TruB family. Type 1 subfamily.

The catalysed reaction is uridine(55) in tRNA = pseudouridine(55) in tRNA. Functionally, responsible for synthesis of pseudouridine from uracil-55 in the psi GC loop of transfer RNAs. This chain is tRNA pseudouridine synthase B, found in Bacillus pumilus (strain SAFR-032).